We begin with the raw amino-acid sequence, 101 residues long: Urease subunit beta (101 aa).

This sequence belongs to the urease beta subunit family. In terms of assembly, heterotrimer of UreA (gamma), UreB (beta) and UreC (alpha) subunits. Three heterotrimers associate to form the active enzyme.

Its subcellular location is the cytoplasm. The enzyme catalyses urea + 2 H2O + H(+) = hydrogencarbonate + 2 NH4(+). The protein operates within nitrogen metabolism; urea degradation; CO(2) and NH(3) from urea (urease route): step 1/1. The chain is Urease subunit beta from Rhizobium rhizogenes (strain K84 / ATCC BAA-868) (Agrobacterium radiobacter).